The chain runs to 263 residues: Ubiquinone/menaquinone biosynthesis C-methyltransferase UbiE (263 aa).

Residues Thr-86, Asp-107, and Ser-152 each coordinate S-adenosyl-L-methionine.

The protein belongs to the class I-like SAM-binding methyltransferase superfamily. MenG/UbiE family.

It catalyses the reaction a 2-demethylmenaquinol + S-adenosyl-L-methionine = a menaquinol + S-adenosyl-L-homocysteine + H(+). It carries out the reaction a 2-methoxy-6-(all-trans-polyprenyl)benzene-1,4-diol + S-adenosyl-L-methionine = a 5-methoxy-2-methyl-3-(all-trans-polyprenyl)benzene-1,4-diol + S-adenosyl-L-homocysteine + H(+). The protein operates within quinol/quinone metabolism; menaquinone biosynthesis; menaquinol from 1,4-dihydroxy-2-naphthoate: step 2/2. It functions in the pathway cofactor biosynthesis; ubiquinone biosynthesis. Functionally, methyltransferase required for the conversion of demethylmenaquinol (DMKH2) to menaquinol (MKH2) and the conversion of 2-polyprenyl-6-methoxy-1,4-benzoquinol (DDMQH2) to 2-polyprenyl-3-methyl-6-methoxy-1,4-benzoquinol (DMQH2). The sequence is that of Ubiquinone/menaquinone biosynthesis C-methyltransferase UbiE from Brucella anthropi (strain ATCC 49188 / DSM 6882 / CCUG 24695 / JCM 21032 / LMG 3331 / NBRC 15819 / NCTC 12168 / Alc 37) (Ochrobactrum anthropi).